The chain runs to 156 residues: Ribosomal RNA large subunit methyltransferase H (156 aa).

Residues Leu73, Gly104, and 123 to 128 (ISSMTL) each bind S-adenosyl-L-methionine.

The protein belongs to the RNA methyltransferase RlmH family. In terms of assembly, homodimer.

The protein resides in the cytoplasm. The catalysed reaction is pseudouridine(1915) in 23S rRNA + S-adenosyl-L-methionine = N(3)-methylpseudouridine(1915) in 23S rRNA + S-adenosyl-L-homocysteine + H(+). Its function is as follows. Specifically methylates the pseudouridine at position 1915 (m3Psi1915) in 23S rRNA. This Burkholderia ambifaria (strain ATCC BAA-244 / DSM 16087 / CCUG 44356 / LMG 19182 / AMMD) (Burkholderia cepacia (strain AMMD)) protein is Ribosomal RNA large subunit methyltransferase H.